The sequence spans 429 residues: Enolase (429 aa).

Q174 contributes to the (2R)-2-phosphoglycerate binding site. The active-site Proton donor is E218. Residues D254, E295, and D321 each contribute to the Mg(2+) site. Residues K346, R375, S376, and K397 each coordinate (2R)-2-phosphoglycerate. K346 acts as the Proton acceptor in catalysis.

The protein belongs to the enolase family. It depends on Mg(2+) as a cofactor.

The protein resides in the cytoplasm. The protein localises to the secreted. It localises to the cell surface. The enzyme catalyses (2R)-2-phosphoglycerate = phosphoenolpyruvate + H2O. It participates in carbohydrate degradation; glycolysis; pyruvate from D-glyceraldehyde 3-phosphate: step 4/5. Catalyzes the reversible conversion of 2-phosphoglycerate (2-PG) into phosphoenolpyruvate (PEP). It is essential for the degradation of carbohydrates via glycolysis. The protein is Enolase of Methanosarcina acetivorans (strain ATCC 35395 / DSM 2834 / JCM 12185 / C2A).